The sequence spans 561 residues: MNINVADLLNGNYILLLFVVLALGLCLGKLRLGSVQLGNSIGVLVVSLLLGQQHFSINTDALNLGFMLFIFCVGVEAGPNFFSIFFRDGKNYLMLALVMVGSALLIALGLGKLFGWDIGLTAGMLAGSMTSTPVLVGAGDTLRHSGIASTQLSSALDNLSLGYALTYLIGLVSLIVGARYLPKLQHQDLQTSAQQIARERGLDTDANRKVYLPVIRAYRVGPELVAWTDGKNLRELGIYRQTGCYIERIRRNGILANPDGDAVLQMGDEIALVGYPDAHARLDPSLRNGKEVFDRDLLDMRIVTEEIVVKNHNAVGRRLAQLKLTDHGCFLNRVIRSQIEMPIDDNVVLNKGDVLQVSGDARRVKTIADRIGFISIHSQVTDLLAFCAFFIIGLMIGMITFQFSNFSFGIGNAAGLLFAGIMLGFLRANHPTFGYIPQGALNMVKEFGLMVFMAGVGLSAGSGISNGLGAVGGQMLIAGLVVSLVPVVICFLFGAYVLRMNRALLFGAMMGARTCAPAMEIISDTARSNIPALGYAGTYAIANVLLTLAGTLIVIIWPGLG.

5 consecutive transmembrane segments (helical) span residues 8–28 (LLNG…LCLG), 32–52 (LGSV…LLGQ), 66–86 (FMLF…SIFF), 94–114 (MLAL…GKLF), and 158–178 (NLSL…IVGA). RCK C-terminal domains follow at residues 200-288 (RGLD…SLRN) and 292-373 (VFDR…RIGF). The next 5 membrane-spanning stretches (helical) occupy residues 383 to 403 (LLAF…TFQF), 406 to 426 (FSFG…LGFL), 447 to 467 (FGLM…ISNG), 475 to 495 (MLIA…LFGA), and 540 to 560 (AIAN…WPGL).

The protein belongs to the AAE transporter (TC 2.A.81) family. YbjL subfamily.

It is found in the cell membrane. In Salmonella gallinarum (strain 287/91 / NCTC 13346), this protein is Putative transport protein YbjL.